Reading from the N-terminus, the 376-residue chain is ATP synthase gamma chain, chloroplastic (376 aa).

The transit peptide at 1–52 (MSCSNVTMLVSSKPSLPDASNLSFRSAFNPFQLPSQNSSSSCTPSRPTSIQC) directs the protein to the chloroplast. C133 is an active-site residue. C250 and C256 are oxidised to a cystine.

It belongs to the ATPase gamma chain family. F-type ATPases have 2 components, CF(1) - the catalytic core - and CF(0) - the membrane proton channel. CF(1) has five subunits: alpha(3), beta(3), gamma(1), delta(1), epsilon(1). CF(0) has four main subunits: a, b, b' and c.

The protein localises to the plastid. It localises to the chloroplast thylakoid membrane. Functionally, produces ATP from ADP in the presence of a proton gradient across the membrane. The gamma chain is believed to be important in regulating ATPase activity and the flow of protons through the CF(0) complex. In Pisum sativum (Garden pea), this protein is ATP synthase gamma chain, chloroplastic (ATPC).